The chain runs to 142 residues: Transcriptional regulator MraZ (142 aa).

2 SpoVT-AbrB domains span residues 5–51 (ASAL…PRPE) and 77–120 (AMDV…DAQT).

Belongs to the MraZ family. Forms oligomers.

The protein localises to the cytoplasm. It is found in the nucleoid. The protein is Transcriptional regulator MraZ of Paraburkholderia xenovorans (strain LB400).